A 154-amino-acid polypeptide reads, in one-letter code: Myoglobin (154 aa).

A Globin domain is found at 2 to 148; the sequence is GLSDDEWNHV…FRNDMASKYK (147 aa). His65 serves as a coordination point for nitrite. His65 is an O2 binding site. His94 contacts heme b.

Belongs to the globin family. In terms of assembly, monomeric.

Its subcellular location is the cytoplasm. It localises to the sarcoplasm. It carries out the reaction Fe(III)-heme b-[protein] + nitric oxide + H2O = Fe(II)-heme b-[protein] + nitrite + 2 H(+). The enzyme catalyses H2O2 + AH2 = A + 2 H2O. Monomeric heme protein which primary function is to store oxygen and facilitate its diffusion within muscle tissues. Reversibly binds oxygen through a pentacoordinated heme iron and enables its timely and efficient release as needed during periods of heightened demand. Depending on the oxidative conditions of tissues and cells, and in addition to its ability to bind oxygen, it also has a nitrite reductase activity whereby it regulates the production of bioactive nitric oxide. Under stress conditions, like hypoxia and anoxia, it also protects cells against reactive oxygen species thanks to its pseudoperoxidase activity. This chain is Myoglobin (MB), found in Caretta caretta (Loggerhead sea turtle).